A 94-amino-acid polypeptide reads, in one-letter code: Small ribosomal subunit protein bS6 (94 aa).

This sequence belongs to the bacterial ribosomal protein bS6 family.

Functionally, binds together with bS18 to 16S ribosomal RNA. The sequence is that of Small ribosomal subunit protein bS6 from Clostridium botulinum (strain 657 / Type Ba4).